The sequence spans 319 residues: Ribosomal RNA small subunit methyltransferase H (319 aa).

Residues 35–37, Asp55, Phe84, Asp104, and Gln111 contribute to the S-adenosyl-L-methionine site; that span reads AGH.

This sequence belongs to the methyltransferase superfamily. RsmH family.

Its subcellular location is the cytoplasm. The catalysed reaction is cytidine(1402) in 16S rRNA + S-adenosyl-L-methionine = N(4)-methylcytidine(1402) in 16S rRNA + S-adenosyl-L-homocysteine + H(+). Functionally, specifically methylates the N4 position of cytidine in position 1402 (C1402) of 16S rRNA. The sequence is that of Ribosomal RNA small subunit methyltransferase H from Enterococcus hirae.